Reading from the N-terminus, the 352-residue chain is Nicotinate-nucleotide--dimethylbenzimidazole phosphoribosyltransferase (352 aa).

The active-site Proton acceptor is the Glu-318.

This sequence belongs to the CobT family.

It carries out the reaction 5,6-dimethylbenzimidazole + nicotinate beta-D-ribonucleotide = alpha-ribazole 5'-phosphate + nicotinate + H(+). The protein operates within nucleoside biosynthesis; alpha-ribazole biosynthesis; alpha-ribazole from 5,6-dimethylbenzimidazole: step 1/2. Its function is as follows. Catalyzes the synthesis of alpha-ribazole-5'-phosphate from nicotinate mononucleotide (NAMN) and 5,6-dimethylbenzimidazole (DMB). The polypeptide is Nicotinate-nucleotide--dimethylbenzimidazole phosphoribosyltransferase (Geotalea uraniireducens (strain Rf4) (Geobacter uraniireducens)).